Reading from the N-terminus, the 532-residue chain is Apolipoprotein N-acyltransferase (532 aa).

6 consecutive transmembrane segments (helical) span residues 37 to 57 (IFVA…GAIA), 75 to 95 (WWFG…ALLV), 106 to 126 (LAVL…AMIA), 128 to 148 (LLWS…ALAE), 179 to 199 (VIGL…PALL), and 207 to 227 (TGIG…AWTL). The CN hydrolase domain occupies 245–494 (VQPSIAQAMK…VGVVDSYLPS (250 aa)). Residue Glu289 is the Proton acceptor of the active site. Residue Lys353 is part of the active site. Cys406 (nucleophile) is an active-site residue. The helical transmembrane segment at 505 to 525 (GWIQTVLILLTLLAASVGLIL) threads the bilayer.

This sequence belongs to the CN hydrolase family. Apolipoprotein N-acyltransferase subfamily.

The protein localises to the cell inner membrane. It catalyses the reaction N-terminal S-1,2-diacyl-sn-glyceryl-L-cysteinyl-[lipoprotein] + a glycerophospholipid = N-acyl-S-1,2-diacyl-sn-glyceryl-L-cysteinyl-[lipoprotein] + a 2-acyl-sn-glycero-3-phospholipid + H(+). It participates in protein modification; lipoprotein biosynthesis (N-acyl transfer). Its function is as follows. Catalyzes the phospholipid dependent N-acylation of the N-terminal cysteine of apolipoprotein, the last step in lipoprotein maturation. The protein is Apolipoprotein N-acyltransferase of Brucella suis biovar 1 (strain 1330).